The sequence spans 176 residues: tRNA (cytidine(56)-2'-O)-methyltransferase (176 aa).

S-adenosyl-L-methionine contacts are provided by residues Leu86 and 111 to 115 (GAEKV).

The protein belongs to the aTrm56 family. As to quaternary structure, homodimer.

The protein localises to the cytoplasm. The enzyme catalyses cytidine(56) in tRNA + S-adenosyl-L-methionine = 2'-O-methylcytidine(56) in tRNA + S-adenosyl-L-homocysteine + H(+). Functionally, specifically catalyzes the AdoMet-dependent 2'-O-ribose methylation of cytidine at position 56 in tRNAs. In Methanoregula boonei (strain DSM 21154 / JCM 14090 / 6A8), this protein is tRNA (cytidine(56)-2'-O)-methyltransferase.